Reading from the N-terminus, the 215-residue chain is Transmembrane protein 267 (215 aa).

3 helical membrane-spanning segments follow: residues 77-97 (FGEIILAGFLASVIDIDHFLL), 114-134 (FLHCSTVIPTVVLTLKFTMHF), and 178-198 (FWLYVIITSSLPHICSFVMYF).

The protein resides in the membrane. The chain is Transmembrane protein 267 (TMEM267) from Bos taurus (Bovine).